A 208-amino-acid polypeptide reads, in one-letter code: Uracil phosphoribosyltransferase (208 aa).

5-phospho-alpha-D-ribose 1-diphosphate-binding positions include arginine 78, arginine 103, and 130–138 (DPMLATGHS). Uracil contacts are provided by residues isoleucine 193 and 198–200 (GDA). Residue aspartate 199 coordinates 5-phospho-alpha-D-ribose 1-diphosphate.

The protein belongs to the UPRTase family. Mg(2+) serves as cofactor.

The enzyme catalyses UMP + diphosphate = 5-phospho-alpha-D-ribose 1-diphosphate + uracil. It functions in the pathway pyrimidine metabolism; UMP biosynthesis via salvage pathway; UMP from uracil: step 1/1. Allosterically activated by GTP. In terms of biological role, catalyzes the conversion of uracil and 5-phospho-alpha-D-ribose 1-diphosphate (PRPP) to UMP and diphosphate. The polypeptide is Uracil phosphoribosyltransferase (Brucella anthropi (strain ATCC 49188 / DSM 6882 / CCUG 24695 / JCM 21032 / LMG 3331 / NBRC 15819 / NCTC 12168 / Alc 37) (Ochrobactrum anthropi)).